The sequence spans 424 residues: 3-phosphoshikimate 1-carboxyvinyltransferase (424 aa).

Lys-20, Ser-21, and Arg-25 together coordinate 3-phosphoshikimate. Position 20 (Lys-20) interacts with phosphoenolpyruvate. 2 residues coordinate phosphoenolpyruvate: Gly-92 and Arg-120. Ser-165, Gln-167, Asp-313, and Lys-340 together coordinate 3-phosphoshikimate. Gln-167 is a binding site for phosphoenolpyruvate. Asp-313 (proton acceptor) is an active-site residue. Phosphoenolpyruvate-binding residues include Arg-344 and Arg-386.

It belongs to the EPSP synthase family. In terms of assembly, monomer.

It localises to the cytoplasm. The catalysed reaction is 3-phosphoshikimate + phosphoenolpyruvate = 5-O-(1-carboxyvinyl)-3-phosphoshikimate + phosphate. It functions in the pathway metabolic intermediate biosynthesis; chorismate biosynthesis; chorismate from D-erythrose 4-phosphate and phosphoenolpyruvate: step 6/7. Functionally, catalyzes the transfer of the enolpyruvyl moiety of phosphoenolpyruvate (PEP) to the 5-hydroxyl of shikimate-3-phosphate (S3P) to produce enolpyruvyl shikimate-3-phosphate and inorganic phosphate. The protein is 3-phosphoshikimate 1-carboxyvinyltransferase of Bacillus cytotoxicus (strain DSM 22905 / CIP 110041 / 391-98 / NVH 391-98).